A 293-amino-acid chain; its full sequence is Large ribosomal subunit protein uL4 (293 aa).

Composition is skewed to basic and acidic residues over residues 1 to 14 (MAEE…EKTP) and 33 to 55 (KTTE…ESTK). 2 disordered regions span residues 1 to 72 (MAEE…IKSE) and 130 to 166 (QRQG…STRS).

The protein belongs to the universal ribosomal protein uL4 family. Part of the 50S ribosomal subunit.

Its function is as follows. One of the primary rRNA binding proteins, this protein initially binds near the 5'-end of the 23S rRNA. It is important during the early stages of 50S assembly. It makes multiple contacts with different domains of the 23S rRNA in the assembled 50S subunit and ribosome. In terms of biological role, forms part of the polypeptide exit tunnel. The polypeptide is Large ribosomal subunit protein uL4 (Mycoplasma mobile (strain ATCC 43663 / 163K / NCTC 11711) (Mesomycoplasma mobile)).